Here is a 955-residue protein sequence, read N- to C-terminus: Bifunctional glutamine synthetase adenylyltransferase/adenylyl-removing enzyme (955 aa).

The segment at 1–458 is adenylyl removase; that stretch reads MTAQAPLSVA…QFEQTFSDKQ (458 aa). Positions 464 to 955 are adenylyl transferase; that stretch reads CAAIWHADLL…GSIDAASPTP (492 aa).

Belongs to the GlnE family. Mg(2+) serves as cofactor.

It catalyses the reaction [glutamine synthetase]-O(4)-(5'-adenylyl)-L-tyrosine + phosphate = [glutamine synthetase]-L-tyrosine + ADP. It carries out the reaction [glutamine synthetase]-L-tyrosine + ATP = [glutamine synthetase]-O(4)-(5'-adenylyl)-L-tyrosine + diphosphate. Involved in the regulation of glutamine synthetase GlnA, a key enzyme in the process to assimilate ammonia. When cellular nitrogen levels are high, the C-terminal adenylyl transferase (AT) inactivates GlnA by covalent transfer of an adenylyl group from ATP to specific tyrosine residue of GlnA, thus reducing its activity. Conversely, when nitrogen levels are low, the N-terminal adenylyl removase (AR) activates GlnA by removing the adenylyl group by phosphorolysis, increasing its activity. The regulatory region of GlnE binds the signal transduction protein PII (GlnB) which indicates the nitrogen status of the cell. In Ralstonia nicotianae (strain ATCC BAA-1114 / GMI1000) (Ralstonia solanacearum), this protein is Bifunctional glutamine synthetase adenylyltransferase/adenylyl-removing enzyme.